A 418-amino-acid chain; its full sequence is Serine hydroxymethyltransferase (418 aa).

(6S)-5,6,7,8-tetrahydrofolate contacts are provided by residues L121 and 125–127 (GHL). K230 bears the N6-(pyridoxal phosphate)lysine mark. A (6S)-5,6,7,8-tetrahydrofolate-binding site is contributed by 356–358 (SPF).

This sequence belongs to the SHMT family. Homodimer. Requires pyridoxal 5'-phosphate as cofactor.

It localises to the cytoplasm. It catalyses the reaction (6R)-5,10-methylene-5,6,7,8-tetrahydrofolate + glycine + H2O = (6S)-5,6,7,8-tetrahydrofolate + L-serine. It participates in one-carbon metabolism; tetrahydrofolate interconversion. It functions in the pathway amino-acid biosynthesis; glycine biosynthesis; glycine from L-serine: step 1/1. Its function is as follows. Catalyzes the reversible interconversion of serine and glycine with tetrahydrofolate (THF) serving as the one-carbon carrier. This reaction serves as the major source of one-carbon groups required for the biosynthesis of purines, thymidylate, methionine, and other important biomolecules. Also exhibits THF-independent aldolase activity toward beta-hydroxyamino acids, producing glycine and aldehydes, via a retro-aldol mechanism. This chain is Serine hydroxymethyltransferase, found in Shewanella piezotolerans (strain WP3 / JCM 13877).